Reading from the N-terminus, the 301-residue chain is Bifunctional protein FolD (301 aa).

NADP(+) is bound by residues 169 to 171 (GRS), serine 194, and isoleucine 235.

This sequence belongs to the tetrahydrofolate dehydrogenase/cyclohydrolase family. As to quaternary structure, homodimer.

The enzyme catalyses (6R)-5,10-methylene-5,6,7,8-tetrahydrofolate + NADP(+) = (6R)-5,10-methenyltetrahydrofolate + NADPH. The catalysed reaction is (6R)-5,10-methenyltetrahydrofolate + H2O = (6R)-10-formyltetrahydrofolate + H(+). It participates in one-carbon metabolism; tetrahydrofolate interconversion. In terms of biological role, catalyzes the oxidation of 5,10-methylenetetrahydrofolate to 5,10-methenyltetrahydrofolate and then the hydrolysis of 5,10-methenyltetrahydrofolate to 10-formyltetrahydrofolate. The polypeptide is Bifunctional protein FolD (Gloeothece citriformis (strain PCC 7424) (Cyanothece sp. (strain PCC 7424))).